We begin with the raw amino-acid sequence, 37 residues long: Chitinase-like protein (37 aa).

The tract at residues 1–20 (VLLSVGGDADTESPEKKNLG) is disordered. In terms of domain architecture, GH18 spans 1-37 (VLLSVGGDADTESPEKKNLGGVSIVDLSMDDFRGLLT).

This sequence belongs to the glycosyl hydrolase 18 family. IDGF subfamily. Glycosylated.

It is found in the secreted. Cooperates with insulin-like peptides to stimulate the proliferation, polarization and motility of imaginal disk cells. May act by stabilizing the binding of insulin-like peptides to its receptor through a simultaneous interaction with both molecules to form a multiprotein signaling complex. This is Chitinase-like protein from Heliothis virescens (Tobacco budworm moth).